A 209-amino-acid polypeptide reads, in one-letter code: Ribonuclease HII (209 aa).

The 192-residue stretch at 18–209 (SLVAGVDEVG…FKPVKALLER (192 aa)) folds into the RNase H type-2 domain. Asp-24, Glu-25, and Asp-116 together coordinate a divalent metal cation.

It belongs to the RNase HII family. Requires Mn(2+) as cofactor. The cofactor is Mg(2+).

The protein resides in the cytoplasm. The catalysed reaction is Endonucleolytic cleavage to 5'-phosphomonoester.. In terms of biological role, endonuclease that specifically degrades the RNA of RNA-DNA hybrids. This is Ribonuclease HII from Shewanella oneidensis (strain ATCC 700550 / JCM 31522 / CIP 106686 / LMG 19005 / NCIMB 14063 / MR-1).